The chain runs to 209 residues: Shikimate kinase (209 aa).

ATP is bound at residue 47–52 (GAGKTT). Residue Thr51 coordinates Mg(2+). Substrate-binding residues include Asp69, Arg93, and Gly115. Residue Arg153 participates in ATP binding. Substrate is bound at residue Arg172.

Belongs to the shikimate kinase family. As to quaternary structure, monomer. The cofactor is Mg(2+).

The protein localises to the cytoplasm. It catalyses the reaction shikimate + ATP = 3-phosphoshikimate + ADP + H(+). Its pathway is metabolic intermediate biosynthesis; chorismate biosynthesis; chorismate from D-erythrose 4-phosphate and phosphoenolpyruvate: step 5/7. Functionally, catalyzes the specific phosphorylation of the 3-hydroxyl group of shikimic acid using ATP as a cosubstrate. The polypeptide is Shikimate kinase (Bordetella avium (strain 197N)).